Here is a 1342-residue protein sequence, read N- to C-terminus: DNA-directed RNA polymerase subunit beta (1342 aa).

2 positions are modified to N6-acetyllysine: K1022 and K1200.

This sequence belongs to the RNA polymerase beta chain family. As to quaternary structure, the RNAP catalytic core consists of 2 alpha, 1 beta, 1 beta' and 1 omega subunit. When a sigma factor is associated with the core the holoenzyme is formed, which can initiate transcription.

The catalysed reaction is RNA(n) + a ribonucleoside 5'-triphosphate = RNA(n+1) + diphosphate. Functionally, DNA-dependent RNA polymerase catalyzes the transcription of DNA into RNA using the four ribonucleoside triphosphates as substrates. The sequence is that of DNA-directed RNA polymerase subunit beta from Escherichia coli O81 (strain ED1a).